Consider the following 561-residue polypeptide: Glutamate--tRNA ligase (561 aa).

Residues 107–117 (PNPSGPLHLGH) carry the 'HIGH' region motif.

Belongs to the class-I aminoacyl-tRNA synthetase family. Glutamate--tRNA ligase type 2 subfamily.

It localises to the cytoplasm. The enzyme catalyses tRNA(Glu) + L-glutamate + ATP = L-glutamyl-tRNA(Glu) + AMP + diphosphate. Functionally, catalyzes the attachment of glutamate to tRNA(Glu) in a two-step reaction: glutamate is first activated by ATP to form Glu-AMP and then transferred to the acceptor end of tRNA(Glu). This is Glutamate--tRNA ligase from Methanospirillum hungatei JF-1 (strain ATCC 27890 / DSM 864 / NBRC 100397 / JF-1).